The sequence spans 81 residues: Putative defensin-like protein 56 (81 aa).

Positions 1–23 are cleaved as a signal peptide; the sequence is MNITKAYVIFFLVVILTNSLSNS. Disulfide bonds link Cys-46–Cys-80, Cys-50–Cys-73, Cys-59–Cys-78, and Cys-63–Cys-79.

Belongs to the DEFL family.

The protein resides in the secreted. In Arabidopsis thaliana (Mouse-ear cress), this protein is Putative defensin-like protein 56.